Reading from the N-terminus, the 167-residue chain is Phosphopantetheine adenylyltransferase (167 aa).

Ser10 provides a ligand contact to substrate. ATP is bound by residues 10–11 (SF) and His18. Lys42, Ala79, and Arg93 together coordinate substrate. Residues 94 to 96 (GLR), Glu104, and 129 to 135 (VRHITAT) contribute to the ATP site.

Belongs to the bacterial CoaD family. As to quaternary structure, homohexamer. Mg(2+) serves as cofactor.

The protein localises to the cytoplasm. It catalyses the reaction (R)-4'-phosphopantetheine + ATP + H(+) = 3'-dephospho-CoA + diphosphate. Its pathway is cofactor biosynthesis; coenzyme A biosynthesis; CoA from (R)-pantothenate: step 4/5. Reversibly transfers an adenylyl group from ATP to 4'-phosphopantetheine, yielding dephospho-CoA (dPCoA) and pyrophosphate. The sequence is that of Phosphopantetheine adenylyltransferase from Beijerinckia indica subsp. indica (strain ATCC 9039 / DSM 1715 / NCIMB 8712).